Here is a 265-residue protein sequence, read N- to C-terminus: 3-methyl-2-oxobutanoate hydroxymethyltransferase (265 aa).

Mg(2+)-binding residues include D44 and D83. Residues 44–45 (DS), D83, and K113 contribute to the 3-methyl-2-oxobutanoate site. E115 serves as a coordination point for Mg(2+). The active-site Proton acceptor is E183.

It belongs to the PanB family. Homodecamer; pentamer of dimers. Mg(2+) serves as cofactor.

It is found in the cytoplasm. The enzyme catalyses 3-methyl-2-oxobutanoate + (6R)-5,10-methylene-5,6,7,8-tetrahydrofolate + H2O = 2-dehydropantoate + (6S)-5,6,7,8-tetrahydrofolate. The protein operates within cofactor biosynthesis; (R)-pantothenate biosynthesis; (R)-pantoate from 3-methyl-2-oxobutanoate: step 1/2. Its function is as follows. Catalyzes the reversible reaction in which hydroxymethyl group from 5,10-methylenetetrahydrofolate is transferred onto alpha-ketoisovalerate to form ketopantoate. The polypeptide is 3-methyl-2-oxobutanoate hydroxymethyltransferase (Leptospira interrogans serogroup Icterohaemorrhagiae serovar copenhageni (strain Fiocruz L1-130)).